The chain runs to 236 residues: MDLQNQMKKAVAQAAVDQIQNGMILGLGSGSTAALMIEALAIKIKSGEIKDVVGVTTSFQGEVLASELGIPLKSLSSVSEIDLAIDGADEVDPKFQLIKGGGACHVQEKLVAALAKKFIVVVDSTKLVEKLNLDFKLPVEVLPSAWKQVQKTLINLGGEGNLRMAQKKAGPIVTDQGNLILDLTFRNGIDQPELLETQINNIPGVLENGLFVNLTDEVLVGKVESDVVGVESLKKI.

Residues Ser-29 to Thr-32, Asp-86 to Asp-89, and Lys-99 to Gly-102 contribute to the substrate site. Glu-108 serves as the catalytic Proton acceptor. Position 126 (Lys-126) interacts with substrate.

It belongs to the ribose 5-phosphate isomerase family. Homodimer.

The enzyme catalyses aldehydo-D-ribose 5-phosphate = D-ribulose 5-phosphate. It participates in carbohydrate degradation; pentose phosphate pathway; D-ribose 5-phosphate from D-ribulose 5-phosphate (non-oxidative stage): step 1/1. Catalyzes the reversible conversion of ribose-5-phosphate to ribulose 5-phosphate. The polypeptide is Ribose-5-phosphate isomerase A (Prochlorococcus marinus (strain NATL1A)).